A 253-amino-acid chain; its full sequence is FGFR1 oncogene partner 2 (253 aa).

Residues 5 to 104 are a coiled coil; the sequence is IEKALADAKA…SALELIMSKY (100 aa). Position 141 is a phosphoserine (serine 141). Residues 160–223 are a coiled coil; sequence LERRHLEANQ…LREILQITRE (64 aa). The disordered stretch occupies residues 231–253; that stretch reads DDASESTSLSALVTNSDLSLRKS. A compositionally biased stretch (polar residues) spans 235–253; sequence ESTSLSALVTNSDLSLRKS.

Belongs to the SIKE family. Expressed in bone marrow, spleen and thymus.

Its subcellular location is the cytoplasm. May be involved in wound healing pathway. In Homo sapiens (Human), this protein is FGFR1 oncogene partner 2 (FGFR1OP2).